The primary structure comprises 1188 residues: Adenomatous polyposis coli protein-related protein 1 (1188 aa).

Positions 1–50 (MSSSSSDENETTIHRTGSNTGGSGIYSQPRAGSSKRTSNVRHDVSDVDDE) are disordered. The interval 1–486 (MSSSSSDENE…LSLRATRASP (486 aa)) is required for interaction with bar-1 and hmp-2. One copy of the ARM repeat lies at 314–358 (NCLKVLASLLSPDARFTSLVDSATGILKYVSQYLANTSTHLELRS). Residues 579–588 (IQQQQQMQKA) show a composition bias toward low complexity. 6 disordered regions span residues 579–624 (IQQQ…SMNP), 670–702 (TESEHHQLTSQQQNTTHYSSGSANTMTRSDGAT), 726–751 (TPNGTVPRKTSEELDSPDDVLPGPSL), 778–952 (QSEM…TMRF), 1003–1092 (CSMI…LKDK), and 1157–1181 (YQKPPFTGRNNGEMSNEKSVTPNPK). The tract at residues 600–1188 (DLDIPTSTVM…NPKQMLVTIV (589 aa)) is required for interaction with pry-1. Polar residues-rich tracts occupy residues 604 to 624 (PTSTVMGTRSNSERSLGSMNP) and 677 to 701 (LTSQQQNTTHYSSGSANTMTRSDGA). 2 stretches are compositionally biased toward polar residues: residues 778 to 788 (QSEMPTSSSTP) and 800 to 811 (FSPTQKTTSSPA). Basic and acidic residues-rich tracts occupy residues 832–843 (RRQDASDADRLL) and 871–900 (EPERRSHSKNEEADRRDAFTASHEPSDHNG). Polar residues-rich tracts occupy residues 909 to 929 (WSPQQQLHRMESLESQASSED), 937 to 946 (EPNSSTSGAA), 1014 to 1039 (QRNETTTTSRDSKALATSTPKGSASS), and 1164 to 1180 (GRNNGEMSNEKSVTPNP).

This sequence belongs to the adenomatous polyposis coli (APC) family. Interacts (via N-terminus) with bar-1 and hmp-2; the interaction with hmp-2 is relatively weak. Interacts (via C-terminus) with pry-1 (via N-terminus). Probably associates with bar-1, gsk-3, pry-1 in a complex. During the L1 stage, expressed in vulval precursor cells (P3-8.p), seam cells and excretory cells.

It localises to the cell junction. The protein localises to the adherens junction. It is found in the cytoplasm. Its subcellular location is the nucleus. Has a role in endoderm cell specification and pharyngeal development. Required for the migration of epithelial cells, organization of the anterior seam cells and ceh-13 expression during embryo morphogenesis. Prevents hyperactivation of the Wnt signaling pathway during endoderm development, probably by preventing hmp-2 nuclear translocation. During larval development, apr-1 is required for expression of lin-39 in P3-8.p. Shown to negatively regulate Wnt signaling in vulval precursor cells. Has a role in cell division by establishing the polarity of the mother cell which forms the asymmetries of the daughter nuclei. During the L4 larval stage, it is required for the asymmetric division and self-renewal of seam cells. Thought to regulate export of wrm-1 from the nucleus possibly as part of a complex involving pry-1. The sequence is that of Adenomatous polyposis coli protein-related protein 1 from Caenorhabditis elegans.